A 226-amino-acid chain; its full sequence is Phosphoheptose isomerase (226 aa).

Positions 50–212 constitute an SIS domain; it reads IAGVFETGGK…ERMMGYGTEC (163 aa). 65–67 lines the substrate pocket; sequence NGG. Positions 74 and 78 each coordinate Zn(2+). Substrate-binding positions include E78, 109 to 110, 135 to 137, S140, and Q188; these read ND and STS. Positions 188 and 196 each coordinate Zn(2+).

This sequence belongs to the SIS family. GmhA subfamily. It depends on Zn(2+) as a cofactor.

It is found in the cytoplasm. It catalyses the reaction 2 D-sedoheptulose 7-phosphate = D-glycero-alpha-D-manno-heptose 7-phosphate + D-glycero-beta-D-manno-heptose 7-phosphate. The protein operates within carbohydrate biosynthesis; D-glycero-D-manno-heptose 7-phosphate biosynthesis; D-glycero-alpha-D-manno-heptose 7-phosphate and D-glycero-beta-D-manno-heptose 7-phosphate from sedoheptulose 7-phosphate: step 1/1. Catalyzes the isomerization of sedoheptulose 7-phosphate in D-glycero-D-manno-heptose 7-phosphate. This Chlorobium phaeobacteroides (strain DSM 266 / SMG 266 / 2430) protein is Phosphoheptose isomerase.